The chain runs to 434 residues: Methylenetetrahydrofolate--tRNA-(uracil-5-)-methyltransferase TrmFO (434 aa).

10–15 (GAGLAG) serves as a coordination point for FAD.

This sequence belongs to the MnmG family. TrmFO subfamily. FAD serves as cofactor.

Its subcellular location is the cytoplasm. It carries out the reaction uridine(54) in tRNA + (6R)-5,10-methylene-5,6,7,8-tetrahydrofolate + NADH + H(+) = 5-methyluridine(54) in tRNA + (6S)-5,6,7,8-tetrahydrofolate + NAD(+). It catalyses the reaction uridine(54) in tRNA + (6R)-5,10-methylene-5,6,7,8-tetrahydrofolate + NADPH + H(+) = 5-methyluridine(54) in tRNA + (6S)-5,6,7,8-tetrahydrofolate + NADP(+). Its function is as follows. Catalyzes the folate-dependent formation of 5-methyl-uridine at position 54 (M-5-U54) in all tRNAs. This Bacillus anthracis (strain A0248) protein is Methylenetetrahydrofolate--tRNA-(uracil-5-)-methyltransferase TrmFO.